The primary structure comprises 373 residues: Tomoregulin-1 (373 aa).

Residues 1–36 (MGAQAPLRLPAAPPLAVCGYTSVLLLFAFCLPGSGA) form the signal peptide. Residues 37–323 (SNQPAGGGGD…VPSRQKLTHV (287 aa)) lie on the Extracellular side of the membrane. The N-linked (GlcNAc...) asparagine glycan is linked to N56. Residues 91-138 (ACQFQCHTNYIPVCGSNGDTYQNECFLRRAACKHQKDITVVARGPCYS) form the Kazal-like 1 domain. Disulfide bonds link C92–C122, C96–C115, and C104–C136. N140 is a glycosylation site (N-linked (GlcNAc...) asparagine). Positions 140-162 (NGSGSGEGEEEGSGAGAHRKHSK) are disordered. The 49-residue stretch at 182–230 (VCNIDCSGYSFNPVCASDGSSYNNPCFVREASCIRQEQIDIRHLGHCTD) folds into the Kazal-like 2 domain. Disulfide bonds link C183-C214, C187-C207, C196-C228, C268-C281, C276-C292, and C294-C303. The EGF-like domain occupies 264–304 (SHMPCPENLNGYCIHGKCEFIYSTQKASCRCESGYTGQHCE). The chain crosses the membrane as a helical span at residues 324–344 (LIAAIIGAVQIAIIVAIVMCI). Topologically, residues 345-373 (TRKCPKNNRGRRQKQNLGHFTSETSSRMV) are cytoplasmic. Positions 352-373 (NRGRRQKQNLGHFTSETSSRMV) are disordered. Residues 359 to 373 (QNLGHFTSETSSRMV) show a composition bias toward polar residues.

It belongs to the tomoregulin family. May interact with ST14.

It is found in the cell membrane. Functionally, neuron-specific restriction factor that prevents herpes simplex virus 1 (HHV-1) infection in the brain by blocking viral entry. Also able to restrict herpes simplex virus 2 (HHV-2) infection, although to a lesser extent. Acts by preventing the association between the viral glycoprotein D (gD) and its cell surface receptor NECTIN1, thereby inhibiting fusion of the virus and the cell membrane. Also able to prevent the association between the viral glycoprotein B (gB) and MYH9/NMMHC-IIA and MYH10/NMMHC-IIB receptors. This Rattus norvegicus (Rat) protein is Tomoregulin-1 (Tmeff1).